Here is a 215-residue protein sequence, read N- to C-terminus: HTH-type transcriptional repressor FabR (215 aa).

Residues 10 to 70 (KTRRSLVEAA…TMVDESGLML (61 aa)) enclose the HTH tetR-type domain. The H-T-H motif DNA-binding region spans 33 to 52 (SLREVAREAVIAPTSFYRHF).

As to quaternary structure, homodimer.

It is found in the cytoplasm. Represses the transcription of fabB, involved in unsaturated fatty acid (UFA) biosynthesis. By controlling UFA production, FabR directly influences the physical properties of the membrane bilayer. The sequence is that of HTH-type transcriptional repressor FabR from Escherichia coli (strain K12 / MC4100 / BW2952).